The primary structure comprises 249 residues: CDP-diacylglycerol pyrophosphatase (249 aa).

The helical transmembrane segment at 5-25 (GYFLLAVIVIVAAAGVGYWKF) threads the bilayer.

This sequence belongs to the Cdh family.

The protein resides in the cell inner membrane. The catalysed reaction is a CDP-1,2-diacyl-sn-glycerol + H2O = a 1,2-diacyl-sn-glycero-3-phosphate + CMP + 2 H(+). Its pathway is phospholipid metabolism; CDP-diacylglycerol degradation; phosphatidate from CDP-diacylglycerol: step 1/1. The sequence is that of CDP-diacylglycerol pyrophosphatase from Salmonella arizonae (strain ATCC BAA-731 / CDC346-86 / RSK2980).